The sequence spans 620 residues: Cilia- and flagella-associated protein 52 (620 aa).

11 WD repeats span residues 62-106 (GHGN…LIAR), 109-150 (LHKG…AICG), 156-195 (LNVGNATSVVFSRCRDEMFVTAGNGTIRVWELDLPNRKIW), 288-327 (QLQGGITSITLRGEGHQFFVGTEESHIYRVNFTDFKETLI), 330-369 (CHFEAVQDIVFPFGTAELFATCAKKDIRVWHTMSKRELLR), 372-411 (VPNMTCHGIDFMRDGKSIISAWDDGKIRAFAPESGRLMYT), 415-454 (AHRIGVTAIATTSDCKRIISGGGEGEVRVWQVGCQTQKLE), 459-498 (EHKSSVSCIRVKKNNEECVTASTDGTCIIWDLVRLRRNQM), 500-541 (LANT…RELE), 543-582 (SLSGSINGMDITQEGGHFVTGGHDHLVKVWDYNEGEVTHV), and 585-620 (GHSGNIMAMRISPGNQYIVSVSADGAILRWKYPFAS).

It belongs to the CFAP52 family. As to quaternary structure, microtubule inner protein component of sperm flagellar doublet microtubules. Interacts with BRCA2. Interacts with the CCT chaperonin complex. Interacts with HSP70. Interacts with AK8. Interacts with CFAP45. Interacts with DNAI1. Interacts with IQDC.

The protein localises to the cytoplasm. The protein resides in the cytoskeleton. Its subcellular location is the cilium axoneme. It is found in the flagellum axoneme. Microtubule inner protein (MIP) part of the dynein-decorated doublet microtubules (DMTs) in cilia axoneme. Important for proper ciliary and flagellar beating. May act in cooperation with CFAP45 and axonemal dynein subunit DNAH11. May play a role in cell growth and/or survival. The polypeptide is Cilia- and flagella-associated protein 52 (Mus musculus (Mouse)).